A 302-amino-acid polypeptide reads, in one-letter code: Glycine--tRNA ligase alpha subunit (302 aa).

The protein belongs to the class-II aminoacyl-tRNA synthetase family. As to quaternary structure, tetramer of two alpha and two beta subunits.

It localises to the cytoplasm. The enzyme catalyses tRNA(Gly) + glycine + ATP = glycyl-tRNA(Gly) + AMP + diphosphate. The chain is Glycine--tRNA ligase alpha subunit from Xanthomonas euvesicatoria pv. vesicatoria (strain 85-10) (Xanthomonas campestris pv. vesicatoria).